A 535-amino-acid chain; its full sequence is Palmdelphin (535 aa).

Residues 1 to 105 adopt a coiled-coil conformation; sequence MEEAELLKER…KEELQVSTKE (105 aa). A disordered region spans residues 423 to 450; it reads VVIDDDDDDDDDEEADKKGEENTKESVS. The segment covering 424-436 has biased composition (acidic residues); that stretch reads VIDDDDDDDDDEE. The segment covering 437-446 has biased composition (basic and acidic residues); it reads ADKKGEENTK.

It belongs to the paralemmin family.

The protein resides in the cytoplasm. It is found in the cell projection. The protein localises to the dendrite. Its subcellular location is the dendritic spine. The sequence is that of Palmdelphin (palmd) from Xenopus laevis (African clawed frog).